The primary structure comprises 102 residues: NADH-quinone oxidoreductase subunit K (102 aa).

The next 3 helical transmembrane spans lie at 6-26 (LEHG…GLMV), 30-50 (ILFV…AFVV), and 62-82 (VMFI…LAIL).

This sequence belongs to the complex I subunit 4L family. NDH-1 is composed of 13 different subunits. Subunits NuoA, H, J, K, L, M, N constitute the membrane sector of the complex.

The protein localises to the cell inner membrane. The enzyme catalyses a quinone + NADH + 5 H(+)(in) = a quinol + NAD(+) + 4 H(+)(out). Its function is as follows. NDH-1 shuttles electrons from NADH, via FMN and iron-sulfur (Fe-S) centers, to quinones in the respiratory chain. The immediate electron acceptor for the enzyme in this species is believed to be ubiquinone. Couples the redox reaction to proton translocation (for every two electrons transferred, four hydrogen ions are translocated across the cytoplasmic membrane), and thus conserves the redox energy in a proton gradient. In Pseudomonas putida (strain ATCC 700007 / DSM 6899 / JCM 31910 / BCRC 17059 / LMG 24140 / F1), this protein is NADH-quinone oxidoreductase subunit K.